The primary structure comprises 346 residues: E3 ubiquitin-protein ligase RNF146-A (346 aa).

The segment at 37–75 (CAICLQTCVHPVSLPCKHVFCYLCVKGASWLGKRCALCR) adopts an RING-type zinc-finger fold. The 77-residue stretch at 91–167 (PELKAASRGN…EHGRRRKIKR (77 aa)) folds into the WWE domain. Disordered stretches follow at residues 195-240 (SSAD…GTSL) and 256-301 (ERSH…ALVA). Over residues 202 to 216 (SVPAQSGASVQSSSV) the composition is skewed to low complexity. A compositionally biased stretch (acidic residues) spans 281–295 (SIEETESDASSDSED).

As to quaternary structure, interacts with poly-ADP-ribosylated AXIN1, AXIN2, BLZF1 and CASC3. In terms of processing, ubiquitinated; autoubiquitinated. Autoubiquitination is enhanced upon poly(ADP-ribose)-binding.

The protein localises to the cytoplasm. It is found in the cytosol. The catalysed reaction is S-ubiquitinyl-[E2 ubiquitin-conjugating enzyme]-L-cysteine + [acceptor protein]-L-lysine = [E2 ubiquitin-conjugating enzyme]-L-cysteine + N(6)-ubiquitinyl-[acceptor protein]-L-lysine.. It functions in the pathway protein modification; protein ubiquitination. In terms of biological role, E3 ubiquitin-protein ligase that specifically binds poly-ADP-ribosylated proteins and mediates their ubiquitination and subsequent degradation. Acts as an activator of the Wnt signaling pathway by mediating the ubiquitination of poly-ADP-ribosylated AXIN1 and AXIN2, 2 key components of the beta-catenin destruction complex. Acts in cooperation with tankyrase proteins (TNKS and TNKS2), which mediate poly-ADP-ribosylation of target proteins AXIN1, AXIN2, BLZF1, CASC3, TNKS and TNKS2. Recognizes and binds tankyrase-dependent poly-ADP-ribosylated proteins via its WWE domain and mediates their ubiquitination. The sequence is that of E3 ubiquitin-protein ligase RNF146-A (RNF146A) from Bos taurus (Bovine).